The chain runs to 274 residues: Diaminopimelate epimerase (274 aa).

Residues asparagine 11, glutamine 44, and asparagine 64 each coordinate substrate. Catalysis depends on cysteine 73, which acts as the Proton donor. Substrate-binding positions include 74–75 (GN), asparagine 157, asparagine 190, and 208–209 (ER). The active-site Proton acceptor is the cysteine 217. Position 218 to 219 (218 to 219 (GS)) interacts with substrate.

The protein belongs to the diaminopimelate epimerase family. In terms of assembly, homodimer.

The protein resides in the cytoplasm. The catalysed reaction is (2S,6S)-2,6-diaminopimelate = meso-2,6-diaminopimelate. Its pathway is amino-acid biosynthesis; L-lysine biosynthesis via DAP pathway; DL-2,6-diaminopimelate from LL-2,6-diaminopimelate: step 1/1. Functionally, catalyzes the stereoinversion of LL-2,6-diaminopimelate (L,L-DAP) to meso-diaminopimelate (meso-DAP), a precursor of L-lysine and an essential component of the bacterial peptidoglycan. This Shigella flexneri serotype 5b (strain 8401) protein is Diaminopimelate epimerase.